The chain runs to 99 residues: Ubiquitin-related modifier 1 homolog 2 (99 aa).

G99 is modified (1-thioglycine). G99 participates in a covalent cross-link: Glycyl lysine isopeptide (Gly-Lys) (interchain with K-? in acceptor proteins).

The protein belongs to the URM1 family. In terms of processing, C-terminal thiocarboxylation occurs in 2 steps, it is first acyl-adenylated (-COAMP) via the hesA/moeB/thiF part of the MOCS3 homolog, then thiocarboxylated (-COSH) via the rhodanese domain of the MOCS3 homolog.

The protein resides in the cytoplasm. It participates in tRNA modification; 5-methoxycarbonylmethyl-2-thiouridine-tRNA biosynthesis. In terms of biological role, acts as a sulfur carrier required for 2-thiolation of mcm(5)S(2)U at tRNA wobble positions of cytosolic tRNA(Lys), tRNA(Glu) and tRNA(Gln). Serves as sulfur donor in tRNA 2-thiolation reaction by being thiocarboxylated (-COSH) at its C-terminus by MOCS3. The sulfur is then transferred to tRNA to form 2-thiolation of mcm(5)S(2)U. Also acts as a ubiquitin-like protein (UBL) that is covalently conjugated via an isopeptide bond to lysine residues of target proteins. The thiocarboxylated form serves as substrate for conjugation and oxidative stress specifically induces the formation of UBL-protein conjugates. This Arabidopsis thaliana (Mouse-ear cress) protein is Ubiquitin-related modifier 1 homolog 2.